Reading from the N-terminus, the 1060-residue chain is Outer capsid protein VP2 (1060 aa).

Belongs to the orbivirus VP2 family.

It localises to the virion. Its function is as follows. The VP2 protein is one of the two proteins (with VP5) which constitute the virus particle outer capsid. It is the major target of the host immunogenic response. This Camelus dromedarius (Dromedary) protein is Outer capsid protein VP2 (Segment-2).